A 1045-amino-acid chain; its full sequence is Protein transport protein Sec16B (1045 aa).

A compositionally biased stretch (pro residues) spans 1–13 (MEPWVPQWPPPSR). The segment at 1 to 78 (MEPWVPQWPP…PQHVPRLGAW (78 aa)) is disordered. Basic and acidic residues predominate over residues 22 to 33 (DSERGLQRDGYH). Polar residues predominate over residues 50–60 (QDVQGSPQPQQ). Residues Ser-55 and Ser-137 each carry the phosphoserine modification. The segment covering 149-168 (RHLSEHRPENQSRTFRRDSE) has biased composition (basic and acidic residues). Disordered regions lie at residues 149 to 193 (RHLS…QERP), 707 to 733 (QQKA…TTES), 748 to 789 (APGC…YSVP), and 813 to 1045 (QTHS…TQPC). The residue at position 186 (Ser-186) is a Phosphoserine. A central conserved domain (CCD); required for localization to endoplasmic reticulum exit sites region spans residues 267-711 (APKKFYIPHV…RHQELQQKAA (445 aa)). Over residues 773 to 784 (GPAAGPAGAPVP) the composition is skewed to low complexity. Residues Ser-852, Ser-858, Ser-866, and Ser-867 each carry the phosphoserine modification. The segment covering 916-926 (EDSSDSPDSEQ) has biased composition (acidic residues). The span at 942-953 (SPPPLLESPPLP) shows a compositional bias: pro residues. Positions 957-966 (AFGGGTGRGE) are enriched in gly residues. Positions 989-998 (ESASSELYSN) are enriched in polar residues.

This sequence belongs to the SEC16 family. In terms of assembly, SEC16A and SEC16B are each present in multiple copies in a heteromeric complex. Interacts with TFG. Interacts with SEC13. In terms of tissue distribution, liver.

The protein localises to the endoplasmic reticulum membrane. It is found in the golgi apparatus membrane. In terms of biological role, plays a role in the organization of the endoplasmic reticulum exit sites (ERES), also known as transitional endoplasmic reticulum (tER). Required for secretory cargo traffic from the endoplasmic reticulum to the Golgi apparatus. Involved in peroxisome biogenesis. Regulates the transport of peroxisomal biogenesis factors PEX3 and PEX16 from the ER to peroxisomes. The protein is Protein transport protein Sec16B (SEC16B) of Oryctolagus cuniculus (Rabbit).